A 512-amino-acid chain; its full sequence is Lysine--tRNA ligase (512 aa).

2 residues coordinate Mg(2+): glutamate 422 and glutamate 429.

Belongs to the class-II aminoacyl-tRNA synthetase family. In terms of assembly, homodimer. Mg(2+) is required as a cofactor.

It localises to the cytoplasm. It carries out the reaction tRNA(Lys) + L-lysine + ATP = L-lysyl-tRNA(Lys) + AMP + diphosphate. This chain is Lysine--tRNA ligase, found in Paraburkholderia phymatum (strain DSM 17167 / CIP 108236 / LMG 21445 / STM815) (Burkholderia phymatum).